The sequence spans 312 residues: tRNA dimethylallyltransferase (312 aa).

11–18 (GLTATGKT) provides a ligand contact to ATP. 13-18 (TATGKT) provides a ligand contact to substrate. The tract at residues 36 to 39 (DSMC) is interaction with substrate tRNA.

The protein belongs to the IPP transferase family. Monomer. Mg(2+) is required as a cofactor.

The enzyme catalyses adenosine(37) in tRNA + dimethylallyl diphosphate = N(6)-dimethylallyladenosine(37) in tRNA + diphosphate. Its function is as follows. Catalyzes the transfer of a dimethylallyl group onto the adenine at position 37 in tRNAs that read codons beginning with uridine, leading to the formation of N6-(dimethylallyl)adenosine (i(6)A). The polypeptide is tRNA dimethylallyltransferase (Caldicellulosiruptor saccharolyticus (strain ATCC 43494 / DSM 8903 / Tp8T 6331)).